Reading from the N-terminus, the 403-residue chain is Presqualene diphosphate synthase (403 aa).

The Mg(2+) site is built by Asp84, Glu87, and Asp88.

It belongs to the phytoene/squalene synthase family. Requires Mg(2+) as cofactor.

The enzyme catalyses 2 (2E,6E)-farnesyl diphosphate = presqualene diphosphate + diphosphate. Catalyzes the biosynthesis of presqualene diphosphate (PSPP). Works in combination with SSL-2 or SSL-3 to produce respectively squalene or botryococcene. In most other species, farnesyl diphosphate (FPP) is converted into squalene in a two-step reaction by a single enzyme. In Botryococcus braunii (Green alga), this protein is Presqualene diphosphate synthase (SSL-1).